The chain runs to 475 residues: Glycogen synthase (475 aa).

Lysine 15 lines the ADP-alpha-D-glucose pocket.

This sequence belongs to the glycosyltransferase 1 family. Bacterial/plant glycogen synthase subfamily.

The catalysed reaction is [(1-&gt;4)-alpha-D-glucosyl](n) + ADP-alpha-D-glucose = [(1-&gt;4)-alpha-D-glucosyl](n+1) + ADP + H(+). It functions in the pathway glycan biosynthesis; glycogen biosynthesis. Its function is as follows. Synthesizes alpha-1,4-glucan chains using ADP-glucose. The sequence is that of Glycogen synthase from Clostridium kluyveri (strain ATCC 8527 / DSM 555 / NBRC 12016 / NCIMB 10680 / K1).